The primary structure comprises 921 residues: Isoleucine--tRNA ligase (921 aa).

The 'HIGH' region motif lies at 57–67 (PYANGDIHMGH). Glu552 contributes to the L-isoleucyl-5'-AMP binding site. A 'KMSKS' region motif is present at residues 593 to 597 (KMSKS). Lys596 lines the ATP pocket. Zn(2+) is bound by residues Cys888, Cys891, Cys908, and Cys911.

The protein belongs to the class-I aminoacyl-tRNA synthetase family. IleS type 1 subfamily. Monomer. The cofactor is Zn(2+).

It localises to the cytoplasm. The catalysed reaction is tRNA(Ile) + L-isoleucine + ATP = L-isoleucyl-tRNA(Ile) + AMP + diphosphate. Catalyzes the attachment of isoleucine to tRNA(Ile). As IleRS can inadvertently accommodate and process structurally similar amino acids such as valine, to avoid such errors it has two additional distinct tRNA(Ile)-dependent editing activities. One activity is designated as 'pretransfer' editing and involves the hydrolysis of activated Val-AMP. The other activity is designated 'posttransfer' editing and involves deacylation of mischarged Val-tRNA(Ile). The sequence is that of Isoleucine--tRNA ligase from Bacillus mycoides (strain KBAB4) (Bacillus weihenstephanensis).